A 378-amino-acid chain; its full sequence is UPF0754 membrane protein BcerKBAB4_0766 (378 aa).

The next 2 helical transmembrane spans lie at 1–21 and 357–377; these read MNIW…GGYT and YLGA…LLFL.

Belongs to the UPF0754 family.

The protein localises to the cell membrane. This is UPF0754 membrane protein BcerKBAB4_0766 from Bacillus mycoides (strain KBAB4) (Bacillus weihenstephanensis).